The chain runs to 215 residues: MSGYFITFEGGEGVGKTTQIFLLAQHLYGKGYDVLTTREPGGTAGAEVIRHILLSGQVQQHYGPLIEAILFTAARIDHVSEVIMPSLQKGKVVLCDRFIDSTRVYQGLNDKVSSSTLAVLECLALNKIKPQITFLLDIPARCSMKRANLRREKAETIDYFEKDELKIQEQRRQAFLQLAKQEPHRFRVIDGTDTVEVIAQQIRDICDQVMLDQLP.

Residue 10–17 (GGEGVGKT) coordinates ATP.

Belongs to the thymidylate kinase family.

It catalyses the reaction dTMP + ATP = dTDP + ADP. In terms of biological role, phosphorylation of dTMP to form dTDP in both de novo and salvage pathways of dTTP synthesis. In Bartonella henselae (strain ATCC 49882 / DSM 28221 / CCUG 30454 / Houston 1) (Rochalimaea henselae), this protein is Thymidylate kinase.